Consider the following 561-residue polypeptide: Cytosolic purine 5'-nucleotidase (561 aa).

The active-site Nucleophile is the aspartate 52. Aspartate 52 and aspartate 54 together coordinate GMP. IMP-binding residues include aspartate 52 and aspartate 54. Residues aspartate 52 and aspartate 54 each coordinate Mg(2+). Aspartate 54 (proton donor) is an active-site residue. Position 144 (arginine 144) interacts with (2R)-2,3-bisphosphoglycerate. ATP-binding residues include arginine 144 and asparagine 154. Residues arginine 144 and asparagine 154 each coordinate dATP. Adenosine is bound at residue asparagine 154. P(1),P(4)-bis(5'-adenosyl) tetraphosphate is bound at residue asparagine 154. GMP contacts are provided by arginine 202, aspartate 206, lysine 215, threonine 249, and asparagine 250. IMP-binding residues include arginine 202, aspartate 206, lysine 215, threonine 249, asparagine 250, serine 251, and lysine 292. Lysine 292 is a binding site for GMP. Residue aspartate 351 coordinates Mg(2+). Lysine 362 is a (2R)-2,3-bisphosphoglycerate binding site. Lysine 362 contacts P(1),P(4)-bis(5'-adenosyl) tetraphosphate. Residue serine 418 is modified to Phosphoserine. Residues methionine 436 and glutamine 453 each contribute to the adenosine site. ATP is bound by residues glutamine 453 and arginine 456. Residues glutamine 453 and arginine 456 each coordinate dATP. Position 453 (glutamine 453) interacts with P(1),P(4)-bis(5'-adenosyl) tetraphosphate. Tyrosine 457 is a binding site for (2R)-2,3-bisphosphoglycerate. Tyrosine 457 is a P(1),P(4)-bis(5'-adenosyl) tetraphosphate binding site. Phosphoserine is present on residues serine 502, serine 511, and serine 527. The disordered stretch occupies residues 538 to 561 (PLAPQEITHCHDEDDDEEEEEEEE). Residues 548-561 (HDEDDDEEEEEEEE) form a required for tetramer assembly region. A compositionally biased stretch (acidic residues) spans 550-561 (EDDDEEEEEEEE).

It belongs to the 5'(3')-deoxyribonucleotidase family. In terms of assembly, homotetramer. Mg(2+) is required as a cofactor. As to expression, widely expressed.

The protein localises to the cytoplasm. Its subcellular location is the cytosol. The enzyme catalyses a ribonucleoside 5'-phosphate + H2O = a ribonucleoside + phosphate. It carries out the reaction a 2'-deoxyribonucleoside + a ribonucleoside 5'-phosphate = a ribonucleoside + a 2'-deoxyribonucleoside 5'-phosphate. The catalysed reaction is IMP + H2O = inosine + phosphate. It catalyses the reaction GMP + H2O = guanosine + phosphate. The enzyme catalyses dIMP + H2O = 2'-deoxyinosine + phosphate. It carries out the reaction dGMP + H2O = 2'-deoxyguanosine + phosphate. The catalysed reaction is XMP + H2O = xanthosine + phosphate. It catalyses the reaction inosine + GMP = guanosine + IMP. The enzyme catalyses dGMP + inosine = 2'-deoxyguanosine + IMP. It carries out the reaction dIMP + inosine = 2'-deoxyinosine + IMP. The catalysed reaction is inosine + UMP = uridine + IMP. It catalyses the reaction inosine + CMP = cytidine + IMP. The enzyme catalyses inosine + AMP = IMP + adenosine. With respect to regulation, allosterically activated by various compounds including ATP, 2,3-BPG/2,3-Bisphosphoglyceric acid and Ap4A/P1,P4-bis(5'-adenosyl) tetraphosphate. Binding of an allosteric activator is a prerequisiste to magnesium and substrate binding. Inhibited by inorganic phosphate. Broad specificity cytosolic 5'-nucleotidase that catalyzes the dephosphorylation of 6-hydroxypurine nucleoside 5'-monophosphates. In addition, possesses a phosphotransferase activity by which it can transfer a phosphate from a donor nucleoside monophosphate to an acceptor nucleoside, preferably inosine, deoxyinosine and guanosine. Has the highest activities for IMP and GMP followed by dIMP, dGMP and XMP. Could also catalyze the transfer of phosphates from pyrimidine monophosphates but with lower efficiency. Through these activities regulates the purine nucleoside/nucleotide pools within the cell. The chain is Cytosolic purine 5'-nucleotidase from Homo sapiens (Human).